Here is a 540-residue protein sequence, read N- to C-terminus: Probable H/ACA ribonucleoprotein complex subunit 4 (540 aa).

Positions 1-24 (MTTDKKSKSKSSEKSTQEVEQVIK) are disordered. Asp-109 functions as the Nucleophile in the catalytic mechanism. The region spanning 280-355 (YKRIVVKDSA…VVATIKRVIM (76 aa)) is the PUA domain. A disordered region spans residues 414-540 (SPVESMNVDT…DKKEKKKSKN (127 aa)). Residues 448–494 (KKEKKDKKEKKKDSSDDESEEEKSSKKDKKEKKEKKEKKEKKSSKDD) adopt a coiled-coil conformation. Over residues 473–489 (KKDKKEKKEKKEKKEKK) the composition is skewed to basic residues. Basic and acidic residues-rich tracts occupy residues 490–503 (SSKDDSDDESSKKE) and 513–528 (SDKDSDSEKESSDKKD). The segment covering 529–540 (KKDKKEKKKSKN) has biased composition (basic residues).

Belongs to the pseudouridine synthase TruB family. In terms of assembly, component of the small nucleolar ribonucleoprotein particles containing H/ACA-type snoRNAs (H/ACA snoRNPs).

Its subcellular location is the nucleus. The protein resides in the nucleolus. It carries out the reaction a uridine in RNA = a pseudouridine in RNA. Functionally, plays a central role in ribosomal RNA processing. Probable catalytic subunit of H/ACA small nucleolar ribonucleoprotein (H/ACA snoRNP) complex, which catalyzes pseudouridylation of rRNA. This involves the isomerization of uridine such that the ribose is subsequently attached to C5, instead of the normal N1. Pseudouridine ('psi') residues may serve to stabilize the conformation of rRNAs. The sequence is that of Probable H/ACA ribonucleoprotein complex subunit 4 (nola4) from Dictyostelium discoideum (Social amoeba).